The following is a 428-amino-acid chain: 3-phosphoshikimate 1-carboxyvinyltransferase (428 aa).

3-phosphoshikimate contacts are provided by lysine 20, serine 21, and arginine 25. Lysine 20 is a binding site for phosphoenolpyruvate. Phosphoenolpyruvate is bound by residues glycine 92 and arginine 120. 3-phosphoshikimate is bound by residues serine 166, glutamine 168, aspartate 314, and lysine 341. Residue glutamine 168 coordinates phosphoenolpyruvate. Aspartate 314 functions as the Proton acceptor in the catalytic mechanism. Phosphoenolpyruvate is bound by residues arginine 345 and arginine 387.

Belongs to the EPSP synthase family. As to quaternary structure, monomer.

The protein localises to the cytoplasm. The catalysed reaction is 3-phosphoshikimate + phosphoenolpyruvate = 5-O-(1-carboxyvinyl)-3-phosphoshikimate + phosphate. The protein operates within metabolic intermediate biosynthesis; chorismate biosynthesis; chorismate from D-erythrose 4-phosphate and phosphoenolpyruvate: step 6/7. In terms of biological role, catalyzes the transfer of the enolpyruvyl moiety of phosphoenolpyruvate (PEP) to the 5-hydroxyl of shikimate-3-phosphate (S3P) to produce enolpyruvyl shikimate-3-phosphate and inorganic phosphate. This chain is 3-phosphoshikimate 1-carboxyvinyltransferase, found in Listeria monocytogenes serotype 4b (strain CLIP80459).